The primary structure comprises 441 residues: Homoserine dehydrogenase (441 aa).

NADP(+) is bound by residues Asn17 and Val18. The NAD(+) site is built by Val18, Val37, and Gly47. Val18 provides a ligand contact to NADPH. NADP(+) contacts are provided by Arg49, Arg50, and Lys107. An NADPH-binding site is contributed by Arg49. Lys107 is an NADPH binding site. The Na(+) site is built by Glu131, Val134, Gly136, and Ile138. 2 residues coordinate NADP(+): Gly189 and Glu192. L-homoserine is bound by residues Glu192 and Asp203. Catalysis depends on Lys207, which acts as the Proton donor. NADP(+) is bound at residue Gly309. Gly309 lines the NAD(+) pocket. Gly309 contacts NADPH. Positions 356 to 435 (YVSMNVADKP…VVQGVSSVIR (80 aa)) constitute an ACT domain.

Belongs to the homoserine dehydrogenase family. A metal cation is required as a cofactor.

The enzyme catalyses L-homoserine + NADP(+) = L-aspartate 4-semialdehyde + NADPH + H(+). It catalyses the reaction L-homoserine + NAD(+) = L-aspartate 4-semialdehyde + NADH + H(+). It functions in the pathway amino-acid biosynthesis; L-methionine biosynthesis via de novo pathway; L-homoserine from L-aspartate: step 3/3. Its pathway is amino-acid biosynthesis; L-threonine biosynthesis; L-threonine from L-aspartate: step 3/5. Functionally, catalyzes the conversion of L-aspartate-beta-semialdehyde (L-Asa) to L-homoserine (L-Hse), the third step in the biosynthesis of threonine and methionine from aspartate. This is Homoserine dehydrogenase (hom) from Mycobacterium tuberculosis (strain CDC 1551 / Oshkosh).